A 352-amino-acid polypeptide reads, in one-letter code: Phosphate acyltransferase (352 aa).

Basic and acidic residues predominate over residues 328-339; the sequence is ESFPGDAREREG. Positions 328–352 are disordered; the sequence is ESFPGDAREREGAPAPDAGTERVAS.

It belongs to the PlsX family. In terms of assembly, homodimer. Probably interacts with PlsY.

Its subcellular location is the cytoplasm. The catalysed reaction is a fatty acyl-[ACP] + phosphate = an acyl phosphate + holo-[ACP]. It functions in the pathway lipid metabolism; phospholipid metabolism. Functionally, catalyzes the reversible formation of acyl-phosphate (acyl-PO(4)) from acyl-[acyl-carrier-protein] (acyl-ACP). This enzyme utilizes acyl-ACP as fatty acyl donor, but not acyl-CoA. This chain is Phosphate acyltransferase, found in Citrifermentans bemidjiense (strain ATCC BAA-1014 / DSM 16622 / JCM 12645 / Bem) (Geobacter bemidjiensis).